Reading from the N-terminus, the 253-residue chain is Claudin domain-containing protein 1 (253 aa).

Residues 5–25 (FATAFVIACVLSLISTIYMAA) traverse the membrane as a helical segment. Asn42 and Asn72 each carry an N-linked (GlcNAc...) asparagine glycan. The next 3 membrane-spanning stretches (helical) occupy residues 141–161 (FLLP…GLCA), 175–195 (ILHL…VAGI), and 216–236 (FCLA…FIWA).

It belongs to the PMP-22/EMP/MP20 family. In terms of tissue distribution, in the brain, highly expressed in endothelial cells of the cerebellum compared to other regions (at protein level).

Its subcellular location is the cell junction. The protein localises to the tight junction. The protein resides in the cell membrane. Its function is as follows. Plays a role in negatively regulating the permeability of cells to small molecules. This Mus musculus (Mouse) protein is Claudin domain-containing protein 1 (Cldnd1).